The chain runs to 230 residues: ATP-dependent dethiobiotin synthetase BioD (230 aa).

12 to 17 provides a ligand contact to ATP; that stretch reads DIGKTH. Thr16 contacts Mg(2+). Lys37 is a catalytic residue. Residue Ser41 participates in substrate binding. ATP is bound by residues Asp52, 115–118, and 175–176; these read EGAG and SE. Mg(2+) contacts are provided by Asp52 and Glu115.

The protein belongs to the dethiobiotin synthetase family. In terms of assembly, homodimer. The cofactor is Mg(2+).

The protein resides in the cytoplasm. It catalyses the reaction (7R,8S)-7,8-diammoniononanoate + CO2 + ATP = (4R,5S)-dethiobiotin + ADP + phosphate + 3 H(+). It functions in the pathway cofactor biosynthesis; biotin biosynthesis; biotin from 7,8-diaminononanoate: step 1/2. In terms of biological role, catalyzes a mechanistically unusual reaction, the ATP-dependent insertion of CO2 between the N7 and N8 nitrogen atoms of 7,8-diaminopelargonic acid (DAPA, also called 7,8-diammoniononanoate) to form a ureido ring. This Caulobacter sp. (strain K31) protein is ATP-dependent dethiobiotin synthetase BioD.